A 250-amino-acid chain; its full sequence is Probable transcriptional regulatory protein Cphamn1_0542 (250 aa).

It belongs to the TACO1 family.

It is found in the cytoplasm. The sequence is that of Probable transcriptional regulatory protein Cphamn1_0542 from Chlorobium phaeobacteroides (strain BS1).